The following is a 640-amino-acid chain: MRLDVEQTSKLDRVRADYNVHYWSQGFYGIDDQGEMYVSPRSDNAHQIQLSKIVKQLEERQLNVPVLVRFPQILHQRVHSICDAFNQAIEEYQYPNKYLLVYPIKVNQQREVVDEILASQAQLETKQLGLEAGSKPELLAVLAMAQHASSVIVCNGYKDREYIRLALIGEKLGHKVFIVLEKMSELDLVLREAKSLGVTPRLGIRIRLASQGAGKWQASGGEKSKFGLSASQVLNVISRLKKENQLDTLQLVHFHLGSQMANIRDVRNGVNESARFYCELRTLGANITYFDVGGGLAIDYDGTRSQSSNSMNYGLVEYARNIVNTVGDVCKDYKQPMPVIISESGRSLTAHHAVLISNVIGTETYKPETVTEPEEDFPLLLNNMWRSWLNLHNGTDARALIEIYNDTQSDLAEVHSQFATGVLTLEHRAWAEQTSLRIYYELNRLMSTKNRFHRPILDELSERLADKFFVNFSLFQSLPDSWGIDQVFPVLPLSGLQNAADRRAVMLDITCDSDGAIDAYVDGQGIESTLPVPAWNEDEPYLMGFFLVGAYQEILGDMHNLFGDTHSVVVNVGDQGEINIDFINEGDTVEDMMRYVHIDVDQIRKNYHSLVSQRVDQEEQQQILAELEQGLSGYTYLEDF.

Residue lysine 105 is modified to N6-(pyridoxal phosphate)lysine. 290-300 lines the substrate pocket; the sequence is FDVGGGLAIDY.

This sequence belongs to the Orn/Lys/Arg decarboxylase class-II family. SpeA subfamily. It depends on Mg(2+) as a cofactor. Pyridoxal 5'-phosphate is required as a cofactor.

It catalyses the reaction L-arginine + H(+) = agmatine + CO2. Its function is as follows. Catalyzes the biosynthesis of agmatine from arginine. The protein is Biosynthetic arginine decarboxylase of Vibrio vulnificus (strain CMCP6).